The chain runs to 239 residues: Protein GrpE (239 aa).

Disordered stretches follow at residues M1 to I56 and S208 to V239. The segment covering T40 to K53 has biased composition (basic and acidic residues). Positions T224–V239 are enriched in acidic residues.

Belongs to the GrpE family. As to quaternary structure, homodimer.

It localises to the cytoplasm. Functionally, participates actively in the response to hyperosmotic and heat shock by preventing the aggregation of stress-denatured proteins, in association with DnaK and GrpE. It is the nucleotide exchange factor for DnaK and may function as a thermosensor. Unfolded proteins bind initially to DnaJ; upon interaction with the DnaJ-bound protein, DnaK hydrolyzes its bound ATP, resulting in the formation of a stable complex. GrpE releases ADP from DnaK; ATP binding to DnaK triggers the release of the substrate protein, thus completing the reaction cycle. Several rounds of ATP-dependent interactions between DnaJ, DnaK and GrpE are required for fully efficient folding. This Prochlorococcus marinus (strain MIT 9215) protein is Protein GrpE.